Reading from the N-terminus, the 485-residue chain is Adenosylhomocysteinase (485 aa).

Positions 64, 139, and 205 each coordinate substrate. 206-208 (TTT) serves as a coordination point for NAD(+). Substrate contacts are provided by Lys-235 and Asp-239. NAD(+) is bound by residues Asn-240, 269–274 (GYGDVG), Glu-292, Asn-327, 348–350 (IGH), and Asn-397.

This sequence belongs to the adenosylhomocysteinase family. NAD(+) is required as a cofactor.

It carries out the reaction S-adenosyl-L-homocysteine + H2O = L-homocysteine + adenosine. It functions in the pathway amino-acid biosynthesis; L-homocysteine biosynthesis; L-homocysteine from S-adenosyl-L-homocysteine: step 1/1. Its function is as follows. Adenosylhomocysteine is a competitive inhibitor of S-adenosyl-L-methionine-dependent methyl transferase reactions; therefore adenosylhomocysteinase may play a key role in the control of methylations via regulation of the intracellular concentration of adenosylhomocysteine. The polypeptide is Adenosylhomocysteinase (SAHH) (Nicotiana sylvestris (Wood tobacco)).